The chain runs to 172 residues: Ribosome maturation factor RimM (172 aa).

The PRC barrel domain occupies 96 to 168 (DGEFYYHEII…RVDVELLEGL (73 aa)).

The protein belongs to the RimM family. In terms of assembly, binds ribosomal protein uS19.

It is found in the cytoplasm. Functionally, an accessory protein needed during the final step in the assembly of 30S ribosomal subunit, possibly for assembly of the head region. Essential for efficient processing of 16S rRNA. May be needed both before and after RbfA during the maturation of 16S rRNA. It has affinity for free ribosomal 30S subunits but not for 70S ribosomes. The sequence is that of Ribosome maturation factor RimM from Streptococcus suis (strain 05ZYH33).